The primary structure comprises 269 residues: 2-dehydro-3-deoxyphosphooctonate aldolase (269 aa).

The protein belongs to the KdsA family.

It is found in the cytoplasm. The catalysed reaction is D-arabinose 5-phosphate + phosphoenolpyruvate + H2O = 3-deoxy-alpha-D-manno-2-octulosonate-8-phosphate + phosphate. It participates in carbohydrate biosynthesis; 3-deoxy-D-manno-octulosonate biosynthesis; 3-deoxy-D-manno-octulosonate from D-ribulose 5-phosphate: step 2/3. The protein operates within bacterial outer membrane biogenesis; lipopolysaccharide biosynthesis. This chain is 2-dehydro-3-deoxyphosphooctonate aldolase, found in Chlamydia trachomatis serovar A (strain ATCC VR-571B / DSM 19440 / HAR-13).